The following is a 91-amino-acid chain: Small ribosomal subunit protein uS19 (91 aa).

Belongs to the universal ribosomal protein uS19 family.

Functionally, protein S19 forms a complex with S13 that binds strongly to the 16S ribosomal RNA. The sequence is that of Small ribosomal subunit protein uS19 from Psychrobacter arcticus (strain DSM 17307 / VKM B-2377 / 273-4).